Here is a 193-residue protein sequence, read N- to C-terminus: Phosphoheptose isomerase (193 aa).

Positions 37-193 constitute an SIS domain; it reads LANAFKAGGK…QLIEKEMADQ (157 aa). 52-54 lines the substrate pocket; the sequence is NGG. Positions 61 and 65 each coordinate Zn(2+). Residues E65, 93–94, 119–121, S124, and Q172 contribute to the substrate site; these read ND and STS. The Zn(2+) site is built by Q172 and H180.

The protein belongs to the SIS family. GmhA subfamily. In terms of assembly, homotetramer. It depends on Zn(2+) as a cofactor.

Its subcellular location is the cytoplasm. The enzyme catalyses 2 D-sedoheptulose 7-phosphate = D-glycero-alpha-D-manno-heptose 7-phosphate + D-glycero-beta-D-manno-heptose 7-phosphate. It participates in carbohydrate biosynthesis; D-glycero-D-manno-heptose 7-phosphate biosynthesis; D-glycero-alpha-D-manno-heptose 7-phosphate and D-glycero-beta-D-manno-heptose 7-phosphate from sedoheptulose 7-phosphate: step 1/1. In terms of biological role, catalyzes the isomerization of sedoheptulose 7-phosphate in D-glycero-D-manno-heptose 7-phosphate. In Pectobacterium atrosepticum (strain SCRI 1043 / ATCC BAA-672) (Erwinia carotovora subsp. atroseptica), this protein is Phosphoheptose isomerase.